Reading from the N-terminus, the 118-residue chain is MARIAGINIPDHKHAVIALTAIYGVGRTRSKAICAAAGIAENVKIKDLDEAQIESLREQVGKFTVEGDLRRQISMNIKRLMDLGCYRGLRHRRSLPVRGQRTKTNARTRKGPRKAIKK.

The disordered stretch occupies residues 94-118 (SLPVRGQRTKTNARTRKGPRKAIKK).

The protein belongs to the universal ribosomal protein uS13 family. As to quaternary structure, part of the 30S ribosomal subunit. Forms a loose heterodimer with protein S19. Forms two bridges to the 50S subunit in the 70S ribosome.

Located at the top of the head of the 30S subunit, it contacts several helices of the 16S rRNA. In the 70S ribosome it contacts the 23S rRNA (bridge B1a) and protein L5 of the 50S subunit (bridge B1b), connecting the 2 subunits; these bridges are implicated in subunit movement. Contacts the tRNAs in the A and P-sites. This is Small ribosomal subunit protein uS13 from Aeromonas hydrophila subsp. hydrophila (strain ATCC 7966 / DSM 30187 / BCRC 13018 / CCUG 14551 / JCM 1027 / KCTC 2358 / NCIMB 9240 / NCTC 8049).